The primary structure comprises 97 residues: Aspartyl/glutamyl-tRNA(Asn/Gln) amidotransferase subunit C (97 aa).

The protein belongs to the GatC family. Heterotrimer of A, B and C subunits.

The catalysed reaction is L-glutamyl-tRNA(Gln) + L-glutamine + ATP + H2O = L-glutaminyl-tRNA(Gln) + L-glutamate + ADP + phosphate + H(+). The enzyme catalyses L-aspartyl-tRNA(Asn) + L-glutamine + ATP + H2O = L-asparaginyl-tRNA(Asn) + L-glutamate + ADP + phosphate + 2 H(+). In terms of biological role, allows the formation of correctly charged Asn-tRNA(Asn) or Gln-tRNA(Gln) through the transamidation of misacylated Asp-tRNA(Asn) or Glu-tRNA(Gln) in organisms which lack either or both of asparaginyl-tRNA or glutaminyl-tRNA synthetases. The reaction takes place in the presence of glutamine and ATP through an activated phospho-Asp-tRNA(Asn) or phospho-Glu-tRNA(Gln). The polypeptide is Aspartyl/glutamyl-tRNA(Asn/Gln) amidotransferase subunit C (Parasynechococcus marenigrum (strain WH8102)).